The sequence spans 162 residues: Ribosome maturation factor RimM (162 aa).

Residues 91–162 (DGSFYIDDLI…LIDVVIIEGM (72 aa)) form the PRC barrel domain.

Belongs to the RimM family. Binds ribosomal protein uS19.

It localises to the cytoplasm. Functionally, an accessory protein needed during the final step in the assembly of 30S ribosomal subunit, possibly for assembly of the head region. Essential for efficient processing of 16S rRNA. May be needed both before and after RbfA during the maturation of 16S rRNA. It has affinity for free ribosomal 30S subunits but not for 70S ribosomes. This chain is Ribosome maturation factor RimM, found in Finegoldia magna (strain ATCC 29328 / DSM 20472 / WAL 2508) (Peptostreptococcus magnus).